A 652-amino-acid chain; its full sequence is Acetyl-coenzyme A synthetase (652 aa).

Residues 191 to 194, T311, and N335 contribute to the CoA site; that span reads RAGR. ATP is bound by residues 387–389, 411–416, D500, and R515; these read GEP and DTWWQT. CoA is bound at residue S523. An ATP-binding site is contributed by R526. Mg(2+) is bound by residues V537, H539, and I542. R584 provides a ligand contact to CoA. An N6-acetyllysine modification is found at K609.

This sequence belongs to the ATP-dependent AMP-binding enzyme family. It depends on Mg(2+) as a cofactor. In terms of processing, acetylated. Deacetylation by the SIR2-homolog deacetylase activates the enzyme.

It carries out the reaction acetate + ATP + CoA = acetyl-CoA + AMP + diphosphate. In terms of biological role, catalyzes the conversion of acetate into acetyl-CoA (AcCoA), an essential intermediate at the junction of anabolic and catabolic pathways. Acs undergoes a two-step reaction. In the first half reaction, Acs combines acetate with ATP to form acetyl-adenylate (AcAMP) intermediate. In the second half reaction, it can then transfer the acetyl group from AcAMP to the sulfhydryl group of CoA, forming the product AcCoA. Functionally, enables the cell to use acetate during aerobic growth to generate energy via the TCA cycle, and biosynthetic compounds via the glyoxylate shunt. Acetylates CheY, the response regulator involved in flagellar movement and chemotaxis. This chain is Acetyl-coenzyme A synthetase, found in Sodalis glossinidius (strain morsitans).